A 166-amino-acid polypeptide reads, in one-letter code: Early E3 18.5 kDa glycoprotein (166 aa).

Positions 1-19 (MGPILVLLVLLSLLEPGSA) are cleaved as a signal peptide. Residues 20–131 (NYDPCLDFDP…SKDNIVTFSI (112 aa)) are Lumenal-facing. A glycan (N-linked (GlcNAc...) asparagine; by host) is linked at Asn31. Intrachain disulfides connect Cys32–Cys50 and Cys44–Cys106. Residues Asn63, Asn67, and Asn97 are each glycosylated (N-linked (GlcNAc...) asparagine; by host). Residues 132 to 152 (AYCLCACLLTALLCVCIHLLV) form a helical membrane-spanning segment. Residues 153–166 (TTRIKNANNKEKMP) are Cytoplasmic-facing. The Di-lysine motif motif lies at 162–166 (KEKMP).

Belongs to the adenoviridae E19 family. In terms of processing, both disulfide bonds are absolutely critical for the interaction with MHC antigens. N-glycosylated; high-mannose.

Its subcellular location is the host endoplasmic reticulum membrane. Functionally, binds and retains class I heavy chains in the endoplasmic reticulum during the early period of virus infection, thereby impairing their transport to the cell surface. Also delays the expression of class I alleles that it cannot affect by direct retention. Binds transporters associated with antigen processing (TAP) and acts as a tapasin inhibitor, preventing class I/TAP association. In consequence, infected cells are masked for immune recognition by cytotoxic T-lymphocytes. The sequence is that of Early E3 18.5 kDa glycoprotein from Human adenovirus B serotype 11 (strain Slobiski) (HAdV-11).